We begin with the raw amino-acid sequence, 123 residues long: Small ribosomal subunit protein bS6 (123 aa).

Residues M102–E123 are disordered. Residues K104–E123 are compositionally biased toward basic and acidic residues.

The protein belongs to the bacterial ribosomal protein bS6 family.

Binds together with bS18 to 16S ribosomal RNA. The polypeptide is Small ribosomal subunit protein bS6 (Vibrio vulnificus (strain CMCP6)).